A 283-amino-acid chain; its full sequence is ATP phosphoribosyltransferase (283 aa).

This sequence belongs to the ATP phosphoribosyltransferase family. Long subfamily. Mg(2+) serves as cofactor.

Its subcellular location is the cytoplasm. The catalysed reaction is 1-(5-phospho-beta-D-ribosyl)-ATP + diphosphate = 5-phospho-alpha-D-ribose 1-diphosphate + ATP. It participates in amino-acid biosynthesis; L-histidine biosynthesis; L-histidine from 5-phospho-alpha-D-ribose 1-diphosphate: step 1/9. Feedback inhibited by histidine. Its function is as follows. Catalyzes the condensation of ATP and 5-phosphoribose 1-diphosphate to form N'-(5'-phosphoribosyl)-ATP (PR-ATP). Has a crucial role in the pathway because the rate of histidine biosynthesis seems to be controlled primarily by regulation of HisG enzymatic activity. The polypeptide is ATP phosphoribosyltransferase (Bifidobacterium longum (strain DJO10A)).